Consider the following 82-residue polypeptide: MASPEMEERLRKIIVDQLGVEPEQVVPSASFTKDLNADSLDLVELIMSIEEEFGVEISDEEAEKIQTVADALNYLETHQSNE.

A Carrier domain is found at 4 to 79 (PEMEERLRKI…DALNYLETHQ (76 aa)). An O-(pantetheine 4'-phosphoryl)serine modification is found at Ser-39.

It belongs to the acyl carrier protein (ACP) family. 4'-phosphopantetheine is transferred from CoA to a specific serine of apo-ACP by AcpS. This modification is essential for activity because fatty acids are bound in thioester linkage to the sulfhydryl of the prosthetic group.

The protein resides in the cytoplasm. It functions in the pathway lipid metabolism; fatty acid biosynthesis. Functionally, carrier of the growing fatty acid chain in fatty acid biosynthesis. The sequence is that of Acyl carrier protein from Chloroflexus aurantiacus (strain ATCC 29366 / DSM 635 / J-10-fl).